The following is a 216-amino-acid chain: Large ribosomal subunit protein uL1 (216 aa).

This sequence belongs to the universal ribosomal protein uL1 family. Component of the large ribosomal subunit.

It localises to the cytoplasm. Its function is as follows. Component of the large ribosomal subunit. The ribosome is a large ribonucleoprotein complex responsible for the synthesis of proteins in the cell. This chain is Large ribosomal subunit protein uL1 (rpl10a), found in Ictalurus punctatus (Channel catfish).